A 406-amino-acid polypeptide reads, in one-letter code: MTDTATTPQTTDAPAFPSNRSCPYQLPDGYAQLRDTPGPLHRVTLYDGRQAWVVTKHEAARKLLGDPRLSSNRTDDNFPATSPRFEAVRESPQAFIGLDPPEHGTRRRMTISEFTVKRIKGMRPEVEEVVHGFLDEMLAAGPTADLVSQFALPVPSMVICRLLGVPYADHEFFQDASKRLVQSTDAQSALTARNDLAGYLDGLITQFQTEPGAGLVGALVADQLANGEIDREELISTAMLLLIAGHETTASMTSLSVITLLDHPEQYAALRADRSLVPGAVEELLRYLAIADIAGGRVATADIEVEGHLIRAGEGVIVVNSIANRDGTVYEDPDALDIHRSARHHLAFGFGVHQCLGQNLARLELEVILNALMDRVPTLRLAVPVEQLVLRPGTTIQGVNELPVTW.

Residues 1-15 show a composition bias toward low complexity; that stretch reads MTDTATTPQTTDAPA. The disordered stretch occupies residues 1–24; the sequence is MTDTATTPQTTDAPAFPSNRSCPY. Thr81 is a binding site for calciol. Heme contacts are provided by His103 and Arg107. Residues Arg193, Ser236, and Ile293 each coordinate calciol. Residues Arg297, His353, and Cys355 each coordinate heme.

It belongs to the cytochrome P450 family. It depends on heme as a cofactor.

It is found in the cytoplasm. The enzyme catalyses calciol + 2 reduced [2Fe-2S]-[ferredoxin] + O2 + 2 H(+) = calcidiol + 2 oxidized [2Fe-2S]-[ferredoxin] + H2O. It carries out the reaction calcidiol + 2 reduced [2Fe-2S]-[ferredoxin] + O2 + 2 H(+) = calcitriol + 2 oxidized [2Fe-2S]-[ferredoxin] + H2O. Involved in the metabolism of vitamin D3 (calciol) and of a number of sulfonylurea herbicides. Catalyzes the two-step hydroxylation (25- and 1-alpha-hydroxylation) of vitamin D3 (VD3) to yield its active form 1-alpha,25-dihydroxyvitamin D3 (calcitriol). The first step is the hydroxylation of the C-25 position of VD3 to produce 25-hydroxyvitamin D3 (calcidiol). The second reaction is the hydroxylation of the C1-alpha-position of calcidiol to produce calcitriol. It can also hydroxylate vitamin D2. The protein is Vitamin D3 dihydroxylase of Streptomyces griseolus.